The chain runs to 354 residues: Tyrosine recombinase XerH (354 aa).

A Core-binding (CB) domain is found at 48–134 (LTKGVKNIDE…AVINFFDFLD (87 aa)). The Tyr recombinase domain maps to 163-346 (KLPEFMSKEE…DNDKLKLAAQ (184 aa)). Catalysis depends on residues Arg-205, Lys-231, His-298, Arg-301, and His-324. Tyr-333 functions as the O-(3'-phospho-DNA)-tyrosine intermediate in the catalytic mechanism.

It belongs to the 'phage' integrase family. XerH subfamily.

It is found in the cytoplasm. Its activity is regulated as follows. FtsK is required for efficient recombination. Site-specific tyrosine recombinase, which acts by catalyzing the cutting and rejoining of the recombining DNA molecules. Binds to the complete atypical dif motif (difH) site and to both halves separately. The protein is Tyrosine recombinase XerH of Campylobacter jejuni subsp. jejuni serotype O:2 (strain ATCC 700819 / NCTC 11168).